A 570-amino-acid polypeptide reads, in one-letter code: Zeta-carotene desaturase, chloroplastic/chromoplastic (570 aa).

Positions 1 to 16 (MASVAATTTLAPALAP) are enriched in low complexity. The interval 1 to 33 (MASVAATTTLAPALAPRRARPGTGLVPPRRASA) is disordered.

Belongs to the zeta carotene desaturase family. NAD(+) is required as a cofactor. The cofactor is NADP(+). FAD serves as cofactor.

It localises to the plastid. It is found in the chloroplast. Its subcellular location is the chromoplast. It carries out the reaction 9,9'-di-cis-zeta-carotene + 2 a quinone = 7,7',9,9'-tetra-cis-lycopene + 2 a quinol. Its pathway is carotenoid biosynthesis; lycopene biosynthesis. In terms of biological role, catalyzes the conversion of zeta-carotene to lycopene via the intermediary of neurosporene. It carries out two consecutive desaturations (introduction of double bonds) at positions C-7 and C-7'. In Zea mays (Maize), this protein is Zeta-carotene desaturase, chloroplastic/chromoplastic (ZDS1).